The sequence spans 293 residues: Ribosomal protein L11 methyltransferase (293 aa).

4 residues coordinate S-adenosyl-L-methionine: Thr145, Gly166, Asp188, and Asn230.

Belongs to the methyltransferase superfamily. PrmA family.

Its subcellular location is the cytoplasm. It catalyses the reaction L-lysyl-[protein] + 3 S-adenosyl-L-methionine = N(6),N(6),N(6)-trimethyl-L-lysyl-[protein] + 3 S-adenosyl-L-homocysteine + 3 H(+). Functionally, methylates ribosomal protein L11. The chain is Ribosomal protein L11 methyltransferase from Yersinia pseudotuberculosis serotype I (strain IP32953).